Reading from the N-terminus, the 346-residue chain is B3 domain-containing protein At3g25182 (346 aa).

The segment at 168-187 (KRRAVEQRKRTGGVKKAKVA) is disordered. The segment at residues 237-338 (FNNLLRNDFL…ILCFAMEQRS (102 aa)) is a DNA-binding region (TF-B3).

The protein localises to the nucleus. The polypeptide is B3 domain-containing protein At3g25182 (Arabidopsis thaliana (Mouse-ear cress)).